Reading from the N-terminus, the 475-residue chain is MNAATKLPGELGPIHFVGIGGIGMSGIAEVLMTLGYQVQGSDAKRSKITDRLQTLGATIFEGQRAENIGEAGVVVISTAIKKGNPELEEARRRGLPVVRRAEMLAELMRLKSNVAIAGTHGKTTTTTMVATLLDAGGFDPTVINGGVIHAYGSNARAGAGEWMVVEADESDGSFNRLPATIAIVTNIDPEHMEHWGSFDALRKGFQDFVSNIPFYGLAVCCTDHPEVQSLVGRLTDRRVATFGFNAQADVRAINLRYENGVAHFDIALQGEAELNEGEVPVIEGCTLPMPGDHNVSNALAAVAVARHLGMKRAQIREALARFGGVSRRFTRVGEVDGVTIIDDYGHHPVEIAAVLKAARQATKGRVIAVHQPHRYSRLSSLFDDFCTCFNEADVVAIAEVYSAGEEPIPGASRDDLVAGLIAHGHRHARAVMDEGDLERLVREQARPGDMVVCLGAGTISAWANNLPERLTEKAA.

An ATP-binding site is contributed by 118–124 (GTHGKTT).

The protein belongs to the MurCDEF family.

It localises to the cytoplasm. The enzyme catalyses UDP-N-acetyl-alpha-D-muramate + L-alanine + ATP = UDP-N-acetyl-alpha-D-muramoyl-L-alanine + ADP + phosphate + H(+). Its pathway is cell wall biogenesis; peptidoglycan biosynthesis. Cell wall formation. The protein is UDP-N-acetylmuramate--L-alanine ligase of Paracoccus denitrificans (strain Pd 1222).